Reading from the N-terminus, the 238-residue chain is NAD(P)H-quinone oxidoreductase subunit K 1 (238 aa).

[4Fe-4S] cluster is bound by residues Cys54, Cys55, Cys119, and Cys150.

This sequence belongs to the complex I 20 kDa subunit family. As to quaternary structure, NDH-1 can be composed of about 15 different subunits; different subcomplexes with different compositions have been identified which probably have different functions. The cofactor is [4Fe-4S] cluster.

The protein localises to the cellular thylakoid membrane. It carries out the reaction a plastoquinone + NADH + (n+1) H(+)(in) = a plastoquinol + NAD(+) + n H(+)(out). The catalysed reaction is a plastoquinone + NADPH + (n+1) H(+)(in) = a plastoquinol + NADP(+) + n H(+)(out). Its function is as follows. NDH-1 shuttles electrons from an unknown electron donor, via FMN and iron-sulfur (Fe-S) centers, to quinones in the respiratory and/or the photosynthetic chain. The immediate electron acceptor for the enzyme in this species is believed to be plastoquinone. Couples the redox reaction to proton translocation, and thus conserves the redox energy in a proton gradient. Cyanobacterial NDH-1 also plays a role in inorganic carbon-concentration. The protein is NAD(P)H-quinone oxidoreductase subunit K 1 of Cyanothece sp. (strain PCC 7425 / ATCC 29141).